The chain runs to 248 residues: Small ribosomal subunit protein eS6 (248 aa).

A disordered region spans residues 215–248 (VQRKKESKAKREEAKRRRSASIRESKSSVSSDKK). Residues 223–248 (AKREEAKRRRSASIRESKSSVSSDKK) are compositionally biased toward basic and acidic residues. Phosphoserine is present on residues Ser233, Ser235, Ser239, Ser242, Ser244, and Ser245.

This sequence belongs to the eukaryotic ribosomal protein eS6 family. Component of the small ribosomal subunit. Part of the small subunit (SSU) processome, composed of more than 70 proteins and the RNA chaperone small nucleolar RNA (snoRNA) U3. Ribosomal protein S6 is the major substrate of protein kinases in eukaryote ribosomes. The phosphorylation is stimulated by growth factors, tumor promoting agents, and mitogens. It is dephosphorylated at growth arrest.

It localises to the cytoplasm. Its subcellular location is the nucleus. It is found in the nucleolus. Component of the 40S small ribosomal subunit. Plays an important role in controlling cell growth and proliferation through the selective translation of particular classes of mRNA. Part of the small subunit (SSU) processome, first precursor of the small eukaryotic ribosomal subunit. During the assembly of the SSU processome in the nucleolus, many ribosome biogenesis factors, an RNA chaperone and ribosomal proteins associate with the nascent pre-rRNA and work in concert to generate RNA folding, modifications, rearrangements and cleavage as well as targeted degradation of pre-ribosomal RNA by the RNA exosome. The sequence is that of Small ribosomal subunit protein eS6 (RpS6) from Drosophila melanogaster (Fruit fly).